The chain runs to 268 residues: Undecaprenyl-diphosphatase (268 aa).

8 helical membrane passes run valine 9–leucine 29, phenylalanine 47–leucine 67, phenylalanine 83–serine 103, leucine 107–leucine 127, phenylalanine 144–valine 164, alanine 184–leucine 204, isoleucine 218–leucine 238, and phenylalanine 246–methionine 266.

This sequence belongs to the UppP family.

Its subcellular location is the cell inner membrane. The enzyme catalyses di-trans,octa-cis-undecaprenyl diphosphate + H2O = di-trans,octa-cis-undecaprenyl phosphate + phosphate + H(+). In terms of biological role, catalyzes the dephosphorylation of undecaprenyl diphosphate (UPP). Confers resistance to bacitracin. The sequence is that of Undecaprenyl-diphosphatase from Rhodopseudomonas palustris (strain HaA2).